Here is a 253-residue protein sequence, read N- to C-terminus: Imidazole glycerol phosphate synthase subunit HisF (253 aa).

Residues Asp11 and Asp130 contribute to the active site.

This sequence belongs to the HisA/HisF family. In terms of assembly, heterodimer of HisH and HisF.

It is found in the cytoplasm. The catalysed reaction is 5-[(5-phospho-1-deoxy-D-ribulos-1-ylimino)methylamino]-1-(5-phospho-beta-D-ribosyl)imidazole-4-carboxamide + L-glutamine = D-erythro-1-(imidazol-4-yl)glycerol 3-phosphate + 5-amino-1-(5-phospho-beta-D-ribosyl)imidazole-4-carboxamide + L-glutamate + H(+). The protein operates within amino-acid biosynthesis; L-histidine biosynthesis; L-histidine from 5-phospho-alpha-D-ribose 1-diphosphate: step 5/9. Its function is as follows. IGPS catalyzes the conversion of PRFAR and glutamine to IGP, AICAR and glutamate. The HisF subunit catalyzes the cyclization activity that produces IGP and AICAR from PRFAR using the ammonia provided by the HisH subunit. The chain is Imidazole glycerol phosphate synthase subunit HisF from Clostridium botulinum (strain Okra / Type B1).